A 76-amino-acid polypeptide reads, in one-letter code: Putative defensin-like protein 121 (76 aa).

An N-terminal signal peptide occupies residues 1–26 (MTYKATILAIFMIILVLGIGTKETRG). Intrachain disulfides connect Cys-30–Cys-74, Cys-39–Cys-59, Cys-44–Cys-68, and Cys-48–Cys-70.

The protein belongs to the DEFL family.

Its subcellular location is the secreted. The chain is Putative defensin-like protein 121 (LCR55) from Arabidopsis thaliana (Mouse-ear cress).